Reading from the N-terminus, the 339-residue chain is tRNA N6-adenosine threonylcarbamoyltransferase (339 aa).

Residues His115 and His119 each contribute to the Fe cation site. Substrate contacts are provided by residues 136-140 (LISGG), Asp168, Glu185, and Ser265. Asp293 provides a ligand contact to Fe cation.

It belongs to the KAE1 / TsaD family. It depends on Fe(2+) as a cofactor.

The protein resides in the cytoplasm. It catalyses the reaction L-threonylcarbamoyladenylate + adenosine(37) in tRNA = N(6)-L-threonylcarbamoyladenosine(37) in tRNA + AMP + H(+). Its function is as follows. Required for the formation of a threonylcarbamoyl group on adenosine at position 37 (t(6)A37) in tRNAs that read codons beginning with adenine. Is probably involved in the transfer of the threonylcarbamoyl moiety of threonylcarbamoyl-AMP (TC-AMP) to the N6 group of A37. The chain is tRNA N6-adenosine threonylcarbamoyltransferase from Pyrobaculum calidifontis (strain DSM 21063 / JCM 11548 / VA1).